Consider the following 85-residue polypeptide: U4-theraphotoxin-Hhn1a (85 aa).

The first 22 residues, 1-22 (MKMTLIAILTCAAVLVLHTTAA), serve as a signal peptide directing secretion. Residues 23-48 (EELEAESQLMEVGMPDTELAAVDEER) constitute a propeptide that is removed on maturation. Intrachain disulfides connect Cys52–Cys66, Cys56–Cys77, and Cys71–Cys82.

It belongs to the neurotoxin 12 (Hwtx-2) family. 02 (Hwtx-2) subfamily. Monomer. As to expression, expressed by the venom gland.

The protein resides in the secreted. Its function is as follows. Neurotoxin active on both insects and mammals. This chain is U4-theraphotoxin-Hhn1a, found in Cyriopagopus hainanus (Chinese bird spider).